The primary structure comprises 498 residues: Glycerol kinase (498 aa).

Threonine 12 provides a ligand contact to ADP. 3 residues coordinate ATP: threonine 12, threonine 13, and serine 14. Threonine 12 contacts sn-glycerol 3-phosphate. Arginine 16 is an ADP binding site. Sn-glycerol 3-phosphate is bound by residues arginine 82, glutamate 83, tyrosine 134, and aspartate 244. Residues arginine 82, glutamate 83, tyrosine 134, aspartate 244, and glutamine 245 each contribute to the glycerol site. 2 residues coordinate ADP: threonine 266 and glycine 310. The ATP site is built by threonine 266, glycine 310, glutamine 314, and glycine 411. Residues glycine 411 and asparagine 415 each contribute to the ADP site.

Belongs to the FGGY kinase family.

It catalyses the reaction glycerol + ATP = sn-glycerol 3-phosphate + ADP + H(+). It functions in the pathway polyol metabolism; glycerol degradation via glycerol kinase pathway; sn-glycerol 3-phosphate from glycerol: step 1/1. Inhibited by fructose 1,6-bisphosphate (FBP). Its function is as follows. Key enzyme in the regulation of glycerol uptake and metabolism. Catalyzes the phosphorylation of glycerol to yield sn-glycerol 3-phosphate. The sequence is that of Glycerol kinase from Azorhizobium caulinodans (strain ATCC 43989 / DSM 5975 / JCM 20966 / LMG 6465 / NBRC 14845 / NCIMB 13405 / ORS 571).